A 742-amino-acid chain; its full sequence is ATP-dependent RNA helicase DBP7 (742 aa).

Positions 45–100 (GKTVSRKRKANTTGDEGIIPGRGENSIKKLHKESSYSSEEQEKYKGRNAHNTQGRT) are disordered. The Q motif signature appears at 143 to 172 (DQFASLGVSSLLVSHLEQKMRIKKPTSIQK). Positions 178 to 372 (IIGNAGKNDF…NVALKDYKLI (195 aa)) constitute a Helicase ATP-binding domain. Residue 191-198 (AQTGSGKT) coordinates ATP. The DEGD box motif lies at 307-310 (DEGD). In terms of domain architecture, Helicase C-terminal spans 405 to 605 (TLAATLNNIT…ILMPAFKDVN (201 aa)). Residues 701-726 (AMGLQSSKDGNSEKKPTKENSKNKMF) form a disordered region. The segment covering 710–722 (GNSEKKPTKENSK) has biased composition (basic and acidic residues).

Belongs to the DEAD box helicase family. DDX31/DBP7 subfamily.

Its subcellular location is the nucleus. The protein localises to the nucleolus. The enzyme catalyses ATP + H2O = ADP + phosphate + H(+). In terms of biological role, ATP-binding RNA helicase involved in the biogenesis of 60S ribosomal subunits and is required for the normal formation of 25S and 5.8S rRNAs. This is ATP-dependent RNA helicase DBP7 (DBP7) from Saccharomyces cerevisiae (strain ATCC 204508 / S288c) (Baker's yeast).